A 225-amino-acid chain; its full sequence is Heptaprenylglyceryl phosphate synthase (225 aa).

Lys6 serves as a coordination point for sn-glycerol 1-phosphate. Asp8 and Thr34 together coordinate Mg(2+). Sn-glycerol 1-phosphate-binding positions include Tyr153 to Gly158, Gly183, and Gly203 to Asn204.

This sequence belongs to the GGGP/HepGP synthase family. Group I subfamily. As to quaternary structure, homodimer. Mg(2+) is required as a cofactor.

The catalysed reaction is sn-glycerol 1-phosphate + all-trans-heptaprenyl diphosphate = 3-heptaprenyl-sn-glycero-1-phosphate + diphosphate. The protein operates within membrane lipid metabolism; glycerophospholipid metabolism. Its function is as follows. Prenyltransferase that catalyzes in vivo the transfer of the heptaprenyl moiety of heptaprenyl pyrophosphate (HepPP; 35 carbon atoms) to the C3 hydroxyl of sn-glycerol-1-phosphate (G1P), producing heptaprenylglyceryl phosphate (HepGP). This reaction is an ether-bond-formation step in the biosynthesis of archaea-type G1P-based membrane lipids found in Bacillales. The polypeptide is Heptaprenylglyceryl phosphate synthase (Listeria monocytogenes serotype 4b (strain F2365)).